A 254-amino-acid chain; its full sequence is 4-hydroxy-tetrahydrodipicolinate reductase (254 aa).

Residue 7–12 participates in NAD(+) binding; sequence GASGRI. Arginine 35 provides a ligand contact to NADP(+). Residues 91–93 and 115–118 contribute to the NAD(+) site; these read GTT and AHNM. Histidine 147 functions as the Proton donor/acceptor in the catalytic mechanism. Residue histidine 148 participates in (S)-2,3,4,5-tetrahydrodipicolinate binding. Lysine 151 (proton donor) is an active-site residue. A (S)-2,3,4,5-tetrahydrodipicolinate-binding site is contributed by 157-158; it reads GT.

The protein belongs to the DapB family.

Its subcellular location is the cytoplasm. It carries out the reaction (S)-2,3,4,5-tetrahydrodipicolinate + NAD(+) + H2O = (2S,4S)-4-hydroxy-2,3,4,5-tetrahydrodipicolinate + NADH + H(+). The enzyme catalyses (S)-2,3,4,5-tetrahydrodipicolinate + NADP(+) + H2O = (2S,4S)-4-hydroxy-2,3,4,5-tetrahydrodipicolinate + NADPH + H(+). The protein operates within amino-acid biosynthesis; L-lysine biosynthesis via DAP pathway; (S)-tetrahydrodipicolinate from L-aspartate: step 4/4. Functionally, catalyzes the conversion of 4-hydroxy-tetrahydrodipicolinate (HTPA) to tetrahydrodipicolinate. The chain is 4-hydroxy-tetrahydrodipicolinate reductase from Helicobacter pylori (strain P12).